We begin with the raw amino-acid sequence, 225 residues long: Plasma membrane-associated cation-binding protein 1 (225 aa).

Glycine 2 carries N-myristoyl glycine lipidation. At threonine 32 the chain carries Phosphothreonine. Serine 107 is subject to Phosphoserine. Residues 140–197 (PVEEVKAEEPAKTEEPAKTEGTSGEKEEIVEETKKGETPETAVVEEKKPEVEEKKEEA) are compositionally biased toward basic and acidic residues. The interval 140-225 (PVEEVKAEEP…TAPVAEPPKP (86 aa)) is disordered. Threonine 152 and threonine 177 each carry phosphothreonine.

This sequence belongs to the DREPP family. As to quaternary structure, interacts with Turnip mosaic virus (TuMV) P3N-PIPO. Requires Cu(2+) as cofactor. In terms of tissue distribution, mostly expressed in the basal region of hypocotyls. Expressed in seedlings, roots, shoots, stems, leaves (e.g. in epidermis and vascular tissues), flowers (e.g. in pistils and anthers) and siliques (at protein level).

It localises to the cell membrane. Its subcellular location is the cytoplasm. The protein localises to the cytoskeleton. The protein resides in the cell junction. It is found in the plasmodesma. May be involved in intracellular signaling through interaction with PtdInsPs and calmodulin (CaM); may keep PtdInsPs attached to the plasma membrane until Ca(2+)-CaM reaches a competitive concentration subsequent to an increase triggered by a stimulus, thus leading to PtdInsPs release and subsequent activation of InsPs-dependent signaling cascade. Interacts competitively at the N-terminus with calcium ions and CaM (in a calcium-dependent manner), and with the phosphatidylinositol phosphates PtdIns(3,4,5)P(3), PtdIns(3,4)P(2), PtdIns(4,5)P(2) and PtdIns(3,5)P(2). Also binds weakly to PtdIns(3)P, PtdIns(4)P and PtdIns(5)P. Negative regulator of hypocotyl cell elongation by destabilizing cortical microtubules in a calcium-dependent manner. Binds directly to and destabilized microtubules to enhance microtubule depolymerization when cytoplasmic calcium increases. In case of Turnip mosaic virus (TuMV) infection, confers sensitivity by promoting viral cell-to-cell movement through interaction with viral P3N-PIPO. The chain is Plasma membrane-associated cation-binding protein 1 (PCAP1) from Arabidopsis thaliana (Mouse-ear cress).